The sequence spans 155 residues: Fibroblast growth factor 1 (155 aa).

Ala2 carries the post-translational modification N-acetylalanine. The Nuclear localization signal signature appears at 24–27 (KKPK). Heparin-binding positions include 24–28 (KKPKL) and 113–116 (ISKK).

This sequence belongs to the heparin-binding growth factors family. As to quaternary structure, monomer. Homodimer. Interacts with FGFR1, FGFR2, FGFR3 and FGFR4. Affinity between fibroblast growth factors (FGFs) and their receptors is increased by heparan sulfate glycosaminoglycans that function as coreceptors. Found in a complex with FGFBP1, FGF1 and FGF2. Interacts with FGFBP1. Part of a Cu(2+)-dependent multiprotein aggregate containing FGF1, S100A13 and SYT1. Interacts with S100A13. Interacts with FGFBP1. Interacts with LRRC59. Interacts with CSNKA, CSNKB and FIBP. While binding with LRRC59, CSNKA and FIBP seem mutually exclusive, CSNKB and FIBP may cooperatively interact with FGF1. Interacts with SYT1. Forms a ternary complex with FGFR1 and ITGAV:ITGB3 and induces the recruitment of PTPN11 to the complex. In the nucleus, phosphorylated by PKC/PRKCD.

It localises to the secreted. It is found in the cytoplasm. The protein resides in the cell cortex. Its subcellular location is the cytosol. The protein localises to the nucleus. Plays an important role in the regulation of cell survival, cell division, angiogenesis, cell differentiation and cell migration. Functions as a potent mitogen in vitro. Acts as a ligand for FGFR1 and integrins. Binds to FGFR1 in the presence of heparin leading to FGFR1 dimerization and activation via sequential autophosphorylation on tyrosine residues which act as docking sites for interacting proteins, leading to the activation of several signaling cascades. Binds to integrin ITGAV:ITGB3. Its binding to integrin, subsequent ternary complex formation with integrin and FGFR1, and the recruitment of PTPN11 to the complex are essential for FGF1 signaling. Induces the phosphorylation and activation of FGFR1, FRS2, MAPK3/ERK1, MAPK1/ERK2 and AKT1. Can induce angiogenesis. The polypeptide is Fibroblast growth factor 1 (FGF1) (Bos taurus (Bovine)).